The following is a 513-amino-acid chain: Putative thymidine phosphorylase 2 (513 aa).

It belongs to the thymidine/pyrimidine-nucleoside phosphorylase family. Type 2 subfamily.

The catalysed reaction is thymidine + phosphate = 2-deoxy-alpha-D-ribose 1-phosphate + thymine. The protein is Putative thymidine phosphorylase 2 of Acidovorax sp. (strain JS42).